We begin with the raw amino-acid sequence, 574 residues long: Ankyrin repeat protein B18 (574 aa).

ANK repeat units follow at residues 56–87 (TGYTALHCYLYNNYFTNDVLKVLLNHGVDVTI), 135–164 (IKSRYMLLKEEDIDENIVSTLLDKGIDPNF), 167–213 (DGYT…NLNA), 217–249 (CGNTPFHLYLSIEMCNNIHMTKMLLTFNPNFEI), 253–285 (HGLTPILCYITSDYIQHDILVMLIHHYETNVGE), and 327–356 (EGKTLLHIACEYNNTHVIDYLIRINGDINA). Positions 541-574 (KCLLTLLPSEIIYEILYMLTIYDLYNISYPPTKV) constitute an F-box domain.

The chain is Ankyrin repeat protein B18 from Variola virus (isolate Human/India/Ind3/1967) (VARV).